The chain runs to 227 residues: Enolase-phosphatase E1 (227 aa).

The Mg(2+) site is built by aspartate 11 and glutamate 13. Substrate is bound by residues 118–119 (SS) and lysine 161. Aspartate 186 contacts Mg(2+).

It belongs to the HAD-like hydrolase superfamily. MasA/MtnC family. As to quaternary structure, monomer. Mg(2+) is required as a cofactor.

Its subcellular location is the cytoplasm. The protein localises to the nucleus. The catalysed reaction is 5-methylsulfanyl-2,3-dioxopentyl phosphate + H2O = 1,2-dihydroxy-5-(methylsulfanyl)pent-1-en-3-one + phosphate. It participates in amino-acid biosynthesis; L-methionine biosynthesis via salvage pathway; L-methionine from S-methyl-5-thio-alpha-D-ribose 1-phosphate: step 3/6. It functions in the pathway amino-acid biosynthesis; L-methionine biosynthesis via salvage pathway; L-methionine from S-methyl-5-thio-alpha-D-ribose 1-phosphate: step 4/6. Functionally, bifunctional enzyme that catalyzes the enolization of 2,3-diketo-5-methylthiopentyl-1-phosphate (DK-MTP-1-P) into the intermediate 2-hydroxy-3-keto-5-methylthiopentenyl-1-phosphate (HK-MTPenyl-1-P), which is then dephosphorylated to form the acireductone 1,2-dihydroxy-3-keto-5-methylthiopentene (DHK-MTPene). The protein is Enolase-phosphatase E1 of Saccharomyces cerevisiae (strain ATCC 204508 / S288c) (Baker's yeast).